Here is a 593-residue protein sequence, read N- to C-terminus: Proteasome-associated ATPase (593 aa).

Residues 5-94 (DDADSRAARW…KEEIDRLAQP (90 aa)) are a coiled coil. 281 to 286 (GCGKTL) is an ATP binding site. The tract at residues 574 to 593 (GKGADAGRSIETASNTGQYL) is disordered. The segment covering 584-593 (ETASNTGQYL) has biased composition (polar residues). Residues 592–593 (YL) form a docks into pockets in the proteasome alpha-ring region.

The protein belongs to the AAA ATPase family. Homohexamer. Assembles into a hexameric ring structure that caps the 20S proteasome core. Strongly interacts with the prokaryotic ubiquitin-like protein Pup through a hydrophobic interface; the interacting region of ARC lies in its N-terminal coiled-coil domain. There is one Pup binding site per ARC hexamer ring. Upon ATP-binding, the C-terminus of ARC interacts with the alpha-rings of the proteasome core, possibly by binding to the intersubunit pockets.

The protein operates within protein degradation; proteasomal Pup-dependent pathway. Its function is as follows. ATPase which is responsible for recognizing, binding, unfolding and translocation of pupylated proteins into the bacterial 20S proteasome core particle. May be essential for opening the gate of the 20S proteasome via an interaction with its C-terminus, thereby allowing substrate entry and access to the site of proteolysis. Thus, the C-termini of the proteasomal ATPase may function like a 'key in a lock' to induce gate opening and therefore regulate proteolysis. This Salinispora arenicola (strain CNS-205) protein is Proteasome-associated ATPase.